The following is a 104-amino-acid chain: Large ribosomal subunit protein bL21c (104 aa).

It belongs to the bacterial ribosomal protein bL21 family. In terms of assembly, part of the 50S ribosomal subunit.

It is found in the plastid. The protein resides in the chloroplast. In terms of biological role, this protein binds to 23S rRNA. This chain is Large ribosomal subunit protein bL21c, found in Porphyra purpurea (Red seaweed).